The primary structure comprises 285 residues: Probable endonuclease 4 (285 aa).

Zn(2+) contacts are provided by histidine 69, histidine 109, glutamate 145, aspartate 179, histidine 182, histidine 216, aspartate 229, histidine 231, and glutamate 261.

It belongs to the AP endonuclease 2 family. It depends on Zn(2+) as a cofactor.

It carries out the reaction Endonucleolytic cleavage to 5'-phosphooligonucleotide end-products.. Endonuclease IV plays a role in DNA repair. It cleaves phosphodiester bonds at apurinic or apyrimidinic (AP) sites, generating a 3'-hydroxyl group and a 5'-terminal sugar phosphate. This Salmonella newport (strain SL254) protein is Probable endonuclease 4.